We begin with the raw amino-acid sequence, 141 residues long: uncharacterized protein (141 aa).

Residues 1–61 (IRLLHSLTPP…PPPPPPPRRA (61 aa)) are disordered. The span at 8–58 (TPPPPPPPPPPPPPPPPPPPPPPPPPPPPPPPPPPPPPPPPPPPPPPPPPP) shows a compositional bias: pro residues. The segment at residues 98-116 (KRLLVAYPVRHFLSAACQF) is a DNA-binding region (H-T-H motif).

This is an uncharacterized protein from Owenia fusiformis (Polychaete worm).